Reading from the N-terminus, the 175-residue chain is Alpha-crystallin B chain (175 aa).

M1 is modified (N-acetylmethionine). A Phosphoserine modification is found at S19. O-linked (GlcNAc) serine glycosylation is present at S41. Phosphoserine occurs at positions 45 and 59. The sHSP domain occupies 56–164 (RAPSWIDTGL…PERTIPITRE (109 aa)). Residue H83 participates in Zn(2+) binding. K92 carries the post-translational modification N6-acetyllysine. Zn(2+) is bound by residues H104, E106, H111, and H119. The tract at residues 142–175 (VLTVNGPRKQAPGPERTIPITREEKPAVTAAPKK) is disordered. N6-acetyllysine is present on K166. T170 carries O-linked (GlcNAc) threonine glycosylation.

This sequence belongs to the small heat shock protein (HSP20) family. As to quaternary structure, heteromer composed of three CRYAA and one CRYAB subunits. Aggregates with homologous proteins, including the small heat shock protein HSPB1, to form large heteromeric complexes. Inter-subunit bridging via zinc ions enhances stability, which is crucial as there is no protein turn over in the lens. Interacts with HSPBAP1 and TTN/titin. Interacts with TMEM109; in the cellular response to DNA damage. Interacts with DES; binds rapidly during early stages of DES filament assembly and a reduced binding seen in the later stages. Interacts with TMED10; the interaction mediates the translocation from the cytoplasm into the ERGIC (endoplasmic reticulum-Golgi intermediate compartment) and thereby secretion. Interacts with ATP6V1A and with MTOR, forming a ternary complex. In terms of tissue distribution, lens as well as other tissues.

Its subcellular location is the cytoplasm. It is found in the nucleus. The protein resides in the secreted. The protein localises to the lysosome. In terms of biological role, may contribute to the transparency and refractive index of the lens. Has chaperone-like activity, preventing aggregation of various proteins under a wide range of stress conditions. In lens epithelial cells, stabilizes the ATP6V1A protein, preventing its degradation by the proteasome. The chain is Alpha-crystallin B chain (CRYAB) from Oryctolagus cuniculus (Rabbit).